We begin with the raw amino-acid sequence, 398 residues long: Succinate--CoA ligase [ADP-forming] subunit beta (398 aa).

Positions 9–254 (KRLLHTYGAP…LTEEDPKEIE (246 aa)) constitute an ATP-grasp domain. ATP is bound by residues K46, 53-55 (GRG), E109, A112, and E117. Mg(2+)-binding residues include N209 and D223. Substrate contacts are provided by residues N274 and 331-333 (GIM).

This sequence belongs to the succinate/malate CoA ligase beta subunit family. Heterotetramer of two alpha and two beta subunits. It depends on Mg(2+) as a cofactor.

The catalysed reaction is succinate + ATP + CoA = succinyl-CoA + ADP + phosphate. The enzyme catalyses GTP + succinate + CoA = succinyl-CoA + GDP + phosphate. The protein operates within carbohydrate metabolism; tricarboxylic acid cycle; succinate from succinyl-CoA (ligase route): step 1/1. In terms of biological role, succinyl-CoA synthetase functions in the citric acid cycle (TCA), coupling the hydrolysis of succinyl-CoA to the synthesis of either ATP or GTP and thus represents the only step of substrate-level phosphorylation in the TCA. The beta subunit provides nucleotide specificity of the enzyme and binds the substrate succinate, while the binding sites for coenzyme A and phosphate are found in the alpha subunit. The chain is Succinate--CoA ligase [ADP-forming] subunit beta from Brucella abortus (strain S19).